Here is a 195-residue protein sequence, read N- to C-terminus: Xanthine phosphoribosyltransferase (195 aa).

The xanthine site is built by Leu20 and Asn27. Residue 128–132 (ANGQA) coordinates 5-phospho-alpha-D-ribose 1-diphosphate. Lys156 contributes to the xanthine binding site.

It belongs to the purine/pyrimidine phosphoribosyltransferase family. Xpt subfamily. As to quaternary structure, homodimer.

It is found in the cytoplasm. It catalyses the reaction XMP + diphosphate = xanthine + 5-phospho-alpha-D-ribose 1-diphosphate. The protein operates within purine metabolism; XMP biosynthesis via salvage pathway; XMP from xanthine: step 1/1. In terms of biological role, converts the preformed base xanthine, a product of nucleic acid breakdown, to xanthosine 5'-monophosphate (XMP), so it can be reused for RNA or DNA synthesis. This chain is Xanthine phosphoribosyltransferase, found in Latilactobacillus sakei subsp. sakei (strain 23K) (Lactobacillus sakei subsp. sakei).